The sequence spans 603 residues: Putative lipase atg15 (603 aa).

Topologically, residues 1–20 (MDQPHRRTRKWHLMDLSVST) are cytoplasmic. A helical; Signal-anchor for type II membrane protein membrane pass occupies residues 21-41 (LLMSLALVLPSCVSAYQPVYF). At 42–603 (RSQEATPFIP…ITPAPILIDL (562 aa)) the chain is on the lumenal side. 5 N-linked (GlcNAc...) asparagine glycosylation sites follow: asparagine 166, asparagine 201, asparagine 223, asparagine 281, and asparagine 305. Serine 321 functions as the Charge relay system in the catalytic mechanism. N-linked (GlcNAc...) asparagine glycosylation occurs at asparagine 467.

It belongs to the AB hydrolase superfamily. Lipase family. As to quaternary structure, binds to both phosphatidylinositol (PI) and phosphatidylinositol 3,5-bisphosphate (PIP2).

The protein localises to the endosome. Its subcellular location is the multivesicular body membrane. The protein resides in the prevacuolar compartment membrane. The enzyme catalyses a triacylglycerol + H2O = a diacylglycerol + a fatty acid + H(+). Functionally, lipase which is essential for lysis of subvacuolar cytoplasm to vacuole targeted bodies and intravacuolar autophagic bodies. Involved in the lysis of intravacuolar multivesicular body (MVB) vesicles. The intravacuolar membrane disintegration by atg15 is critical to life span extension. This chain is Putative lipase atg15 (atg15), found in Emericella nidulans (strain FGSC A4 / ATCC 38163 / CBS 112.46 / NRRL 194 / M139) (Aspergillus nidulans).